A 708-amino-acid chain; its full sequence is Leucine-rich repeat neuronal protein 3 (708 aa).

The N-terminal stretch at 1–22 (MKDMPLRIHVLLGLAITTLVQA) is a signal peptide. Residues 23 to 69 (VDKKVDCPRLCTCEIRPWFTPRSIYMEASTVDCNDLGLLTFPARLPA) enclose the LRRNT domain. Residues 23–628 (VDKKVDCPRL…KEYEKNNTTT (606 aa)) lie on the Extracellular side of the membrane. LRR repeat units follow at residues 70–91 (NTQI…TDFP), 93–114 (NLTG…NVKK), 117–138 (QLLS…CLSE), 141–162 (NLQE…AFIG), 165–186 (NLLR…WFDA), 189–210 (NLEI…NFKP), 213–234 (NLRS…ALVG), 237–258 (NLES…ALQK), 261–282 (NLKF…DFSN), 285–304 (HLKE…DSLA), 310–332 (DLRK…AFFR), and 335–358 (KLES…ESLP). N-linked (GlcNAc...) asparagine glycans are attached at residues N93 and N103. N223 is a glycosylation site (N-linked (GlcNAc...) asparagine). Residues 368–421 (NPIRCDCVIRWMNMNKTNIRFMEPDSLFCVDPPEFQGQNVRQVHFRDMMEICLP) form the LRRCT domain. N-linked (GlcNAc...) asparagine glycosylation occurs at N382. Positions 421-514 (PLIAPESFPS…DLKSVMIKVD (94 aa)) constitute an Ig-like C2-type domain. C444 and C496 are oxidised to a cystine. N-linked (GlcNAc...) asparagine glycans are attached at residues N522, N579, N608, N624, and N625. Positions 523–617 (GSLNIKIRDI…NVTTKGLHPD (95 aa)) constitute a Fibronectin type-III domain. A helical membrane pass occupies residues 629 to 649 (LMACLGGLLGIIGVICLISCL). Over 650-708 (SPEMNCDGGHSYVRNYLQKPTFALGELYPPLINLWEAGKEKSTSLKVKATVIGLPTNMS) the chain is Cytoplasmic.

Its subcellular location is the membrane. This is Leucine-rich repeat neuronal protein 3 (LRRN3) from Homo sapiens (Human).